The sequence spans 154 residues: Transcriptional repressor NrdR (154 aa).

The segment at 3–34 is a zinc-finger region; that stretch reads CPFCRHPDSRVVDSREADEGQAIRRRRSCPEC. The 91-residue stretch at 46-136 folds into the ATP-cone domain; sequence LSVVKRSGVT…VYRSFSSAED (91 aa).

Belongs to the NrdR family. The cofactor is Zn(2+).

Its function is as follows. Negatively regulates transcription of bacterial ribonucleotide reductase nrd genes and operons by binding to NrdR-boxes. The protein is Transcriptional repressor NrdR of Rhodococcus jostii (strain RHA1).